The sequence spans 122 residues: Large ribosomal subunit protein uL18 (122 aa).

Belongs to the universal ribosomal protein uL18 family. Part of the 50S ribosomal subunit; part of the 5S rRNA/L5/L18/L25 subcomplex. Contacts the 5S and 23S rRNAs.

In terms of biological role, this is one of the proteins that bind and probably mediate the attachment of the 5S RNA into the large ribosomal subunit, where it forms part of the central protuberance. This chain is Large ribosomal subunit protein uL18, found in Geotalea uraniireducens (strain Rf4) (Geobacter uraniireducens).